Here is a 647-residue protein sequence, read N- to C-terminus: MITGKDMYDVLAAMVPLYVAMILAYGSVRWWGIFTPDQCSGINRFVAVFAVPLLSFHFISSNDPYAMNYHFLAADSLQKVVILAALFLWQAFSRRGSLEWMITLFSLSTLPNTLVMGIPLLRAMYGDFSGNLMVQIVVLQSIIWYTLMLFLFEFRGAKLLISEQFPETAGSITSFRVDSDVISLNGREPLQTDAEIGDDGKLHVVVRRSSAASSMISSFNKSHGGGLNSSMITPRASNLTGVEIYSVQSSREPTPRASSFNQTDFYAMFNASKAPSPRHGYTNSYGGAGAGPGGDVYSLQSSKGVTPRTSNFDEEVMKTAKKAGRGGRSMSGELYNNNSVPSYPPPNPMFTGSTSGASGVKKKESGGGGSGGGVGVGGQNKEMNMFVWSSSASPVSEANAKNAMTRGSSTDVSTDPKVSIPPHDNLATKAMQNLIENMSPGRKGHVEMDQDGNNGGKSPYMGKKGSDVEDGGPGPRKQQMPPASVMTRLILIMVWRKLIRNPNTYSSLFGLAWSLVSFKWNIKMPTIMSGSISILSDAGLGMAMFSLGLFMALQPKIIACGKSVAGFAMAVRFLTGPAVIAATSIAIGIRGDLLHIAIVQAALPQGIVPFVFAKEYNVHPDILSTAVIFGMLVALPVTVLYYVLLGL.

The Extracellular segment spans residues 1-7; sequence MITGKDM. The chain crosses the membrane as a helical span at residues 8–28; it reads YDVLAAMVPLYVAMILAYGSV. The Cytoplasmic segment spans residues 29–38; the sequence is RWWGIFTPDQ. A helical membrane pass occupies residues 39–59; sequence CSGINRFVAVFAVPLLSFHFI. Val51 is a (indol-3-yl)acetate binding site. Residues 60-68 lie on the Extracellular side of the membrane; that stretch reads SSNDPYAMN. The helical transmembrane segment at 69–89 threads the bilayer; that stretch reads YHFLAADSLQKVVILAALFLW. Over 90-100 the chain is Cytoplasmic; sequence QAFSRRGSLEW. The chain crosses the membrane as a helical span at residues 101–121; it reads MITLFSLSTLPNTLVMGIPLL. Positions 112 and 114 each coordinate (indol-3-yl)acetate. The Extracellular segment spans residues 122-131; the sequence is RAMYGDFSGN. Residues 132–152 traverse the membrane as a helical segment; the sequence is LMVQIVVLQSIIWYTLMLFLF. Residue Tyr145 coordinates (indol-3-yl)acetate. Topologically, residues 153–507 are cytoplasmic; that stretch reads EFRGAKLLIS…LIRNPNTYSS (355 aa). Residues Ser237, Ser258, and Ser310 each carry the phosphoserine modification. The disordered stretch occupies residues 339 to 380; that stretch reads SVPSYPPPNPMFTGSTSGASGVKKKESGGGGSGGGVGVGGQN. Thr354 is modified (phosphothreonine). Over residues 366-378 the composition is skewed to gly residues; the sequence is GGGGSGGGVGVGG. A Phosphoserine modification is found at Ser393. Disordered regions lie at residues 397 to 420 and 440 to 481; these read EANAKNAMTRGSSTDVSTDPKVSI and PGRK…QQMP. The helical transmembrane segment at 508–528 threads the bilayer; that stretch reads LFGLAWSLVSFKWNIKMPTIM. Over 529–531 the chain is Extracellular; it reads SGS. Residues 532-552 form a helical membrane-spanning segment; the sequence is ISILSDAGLGMAMFSLGLFMA. Topologically, residues 553 to 568 are cytoplasmic; it reads LQPKIIACGKSVAGFA. A helical transmembrane segment spans residues 569–589; that stretch reads MAVRFLTGPAVIAATSIAIGI. Topologically, residues 590–592 are extracellular; that stretch reads RGD. The helical transmembrane segment at 593–613 threads the bilayer; the sequence is LLHIAIVQAALPQGIVPFVFA. Residues Ile607 and Val608 each contribute to the (indol-3-yl)acetate site. At 614–626 the chain is on the cytoplasmic side; the sequence is KEYNVHPDILSTA. A helical membrane pass occupies residues 627 to 647; sequence VIFGMLVALPVTVLYYVLLGL.

Belongs to the auxin efflux carrier (TC 2.A.69.1) family. Homodimer. Interacts with FYPP1 and FYPP3. Component of a complex made of PINs (e.g. PIN1 and PIN2), MAB4/MELs (e.g. NPY1/MAB4 and NPY5/MEL1) and AGC kinases (e.g. D6PK and PID) at the plasma membrane. Binds directly to NPY1/MAB4, NPY5/MEL1 and PID. Root-specific. Localized to the cortex, epidermis and lateral root cap, predominantly at the upper side of cells.

It localises to the cell membrane. Its function is as follows. Acts as a component of the auxin efflux carrier. Seems to be involved in the root-specific auxin transport, and mediates the root gravitropism. Its particular localization suggests a role in the translocation of auxin towards the elongation zone. Recrutes NPY proteins (e.g. NPY1/MAB4 and NPY5/MEL1) to the plasma membrane in a polar basal localization in root epidermis; this activity is optimized by AGC kinases-mediated (e.g. D6PK and PID) phosphorylation that limits their lateral diffusion-based escape. The polypeptide is Auxin efflux carrier component 2 (Arabidopsis thaliana (Mouse-ear cress)).